Consider the following 315-residue polypeptide: Ribose-phosphate pyrophosphokinase (315 aa).

Residues 37–39 (DGE) and 96–97 (RQ) contribute to the ATP site. Mg(2+) is bound by residues histidine 131 and aspartate 170. Lysine 194 is an active-site residue. Residues arginine 196, aspartate 220, and 224-228 (DTGGT) contribute to the D-ribose 5-phosphate site.

The protein belongs to the ribose-phosphate pyrophosphokinase family. Class I subfamily. In terms of assembly, homohexamer. Mg(2+) is required as a cofactor.

The protein localises to the cytoplasm. The enzyme catalyses D-ribose 5-phosphate + ATP = 5-phospho-alpha-D-ribose 1-diphosphate + AMP + H(+). It participates in metabolic intermediate biosynthesis; 5-phospho-alpha-D-ribose 1-diphosphate biosynthesis; 5-phospho-alpha-D-ribose 1-diphosphate from D-ribose 5-phosphate (route I): step 1/1. Involved in the biosynthesis of the central metabolite phospho-alpha-D-ribosyl-1-pyrophosphate (PRPP) via the transfer of pyrophosphoryl group from ATP to 1-hydroxyl of ribose-5-phosphate (Rib-5-P). This is Ribose-phosphate pyrophosphokinase from Photorhabdus laumondii subsp. laumondii (strain DSM 15139 / CIP 105565 / TT01) (Photorhabdus luminescens subsp. laumondii).